Reading from the N-terminus, the 337-residue chain is Heat-inducible transcription repressor HrcA (337 aa).

Belongs to the HrcA family.

Negative regulator of class I heat shock genes (grpE-dnaK-dnaJ and groELS operons). Prevents heat-shock induction of these operons. This Nocardioides sp. (strain ATCC BAA-499 / JS614) protein is Heat-inducible transcription repressor HrcA.